We begin with the raw amino-acid sequence, 255 residues long: MFPALSSERVLVLIPARMAATRLPGKPLADVGGRPMIVEVARRAAAAAIGPVAVATDSEEIAAAVRAAGVTAVLTRADHPSGSDRIFEALGALDPDGAVDVVVNVQGDLPTIAPQTIRSALAPLAEPAVDIATLCAEIVVEDERTDPNVVKVVGSPLDDNLLRALYFTRATAPFGAGPLYHHIGLYAYRRPALARFVALAPSMLEQREKLEQLRALEAGMRIDVAVVDAVPLGVDTQAHLDRARAILALEAAEQK.

The protein belongs to the KdsB family.

It is found in the cytoplasm. The catalysed reaction is 3-deoxy-alpha-D-manno-oct-2-ulosonate + CTP = CMP-3-deoxy-beta-D-manno-octulosonate + diphosphate. It participates in nucleotide-sugar biosynthesis; CMP-3-deoxy-D-manno-octulosonate biosynthesis; CMP-3-deoxy-D-manno-octulosonate from 3-deoxy-D-manno-octulosonate and CTP: step 1/1. The protein operates within bacterial outer membrane biogenesis; lipopolysaccharide biosynthesis. Activates KDO (a required 8-carbon sugar) for incorporation into bacterial lipopolysaccharide in Gram-negative bacteria. The sequence is that of 3-deoxy-manno-octulosonate cytidylyltransferase from Xanthobacter autotrophicus (strain ATCC BAA-1158 / Py2).